Here is a 240-residue protein sequence, read N- to C-terminus: Large ribosomal subunit protein uL2 (240 aa).

The segment at 200–240 (HPFGGGGRQHPGKPKSISRNAPPGRKVGDIASKRTGRGGNE) is disordered.

Belongs to the universal ribosomal protein uL2 family. In terms of assembly, part of the 50S ribosomal subunit. Forms a bridge to the 30S subunit in the 70S ribosome. Interacts weakly with protein L37Ae.

Its function is as follows. One of the primary rRNA binding proteins. Required for association of the 30S and 50S subunits to form the 70S ribosome, for tRNA binding and peptide bond formation. It has been suggested to have peptidyltransferase activity; this is somewhat controversial. Makes several contacts with the 16S rRNA in the 70S ribosome. The chain is Large ribosomal subunit protein uL2 (rpl2) from Haloarcula marismortui (strain ATCC 43049 / DSM 3752 / JCM 8966 / VKM B-1809) (Halobacterium marismortui).